An 896-amino-acid polypeptide reads, in one-letter code: Protein translocase subunit SecA (896 aa).

Residues Gln87, 105-109 (GEGKT), and Asp512 each bind ATP. The disordered stretch occupies residues 867 to 889 (QEPARSNRVAGRNDPCPCGSGKK). 4 residues coordinate Zn(2+): Cys882, Cys884, Cys893, and Cys894.

The protein belongs to the SecA family. Monomer and homodimer. Part of the essential Sec protein translocation apparatus which comprises SecA, SecYEG and auxiliary proteins SecDF-YajC and YidC. Zn(2+) is required as a cofactor.

It is found in the cell inner membrane. The protein resides in the cytoplasm. It catalyses the reaction ATP + H2O + cellular proteinSide 1 = ADP + phosphate + cellular proteinSide 2.. In terms of biological role, part of the Sec protein translocase complex. Interacts with the SecYEG preprotein conducting channel. Has a central role in coupling the hydrolysis of ATP to the transfer of proteins into and across the cell membrane, serving as an ATP-driven molecular motor driving the stepwise translocation of polypeptide chains across the membrane. The sequence is that of Protein translocase subunit SecA from Pelobacter propionicus (strain DSM 2379 / NBRC 103807 / OttBd1).